Here is a 513-residue protein sequence, read N- to C-terminus: Putative thymidine phosphorylase 2 (513 aa).

It belongs to the thymidine/pyrimidine-nucleoside phosphorylase family. Type 2 subfamily.

It carries out the reaction thymidine + phosphate = 2-deoxy-alpha-D-ribose 1-phosphate + thymine. The chain is Putative thymidine phosphorylase 2 from Acidovorax sp. (strain JS42).